A 367-amino-acid chain; its full sequence is Molybdenum import ATP-binding protein ModC (367 aa).

Residues Met1–Glu234 form the ABC transporter domain. Gly33–Ser40 lines the ATP pocket. One can recognise a Mop domain in the interval His293–Gly366.

Belongs to the ABC transporter superfamily. Molybdate importer (TC 3.A.1.8) family. In terms of assembly, the complex is composed of two ATP-binding proteins (ModC), two transmembrane proteins (ModB) and a solute-binding protein (ModA).

The protein localises to the cell inner membrane. It catalyses the reaction molybdate(out) + ATP + H2O = molybdate(in) + ADP + phosphate + H(+). Its function is as follows. Part of the ABC transporter complex ModABC involved in molybdenum import. Responsible for energy coupling to the transport system. In Granulibacter bethesdensis (strain ATCC BAA-1260 / CGDNIH1), this protein is Molybdenum import ATP-binding protein ModC.